The sequence spans 666 residues: Calpain-10 (666 aa).

The 309-residue stretch at 13–321 (LFRDAAFPAS…FDEVTIGYPV (309 aa)) folds into the Calpain catalytic domain. Catalysis depends on residues Cys73, His238, and Asn263. Domain III stretches follow at residues 322–488 (TEAG…ISLS) and 507–648 (EWET…IHSQ).

The protein belongs to the peptidase C2 family.

Functionally, calcium-regulated non-lysosomal thiol-protease which catalyzes limited proteolysis of substrates involved in cytoskeletal remodeling and signal transduction. May play a role in insulin-stimulated glucose uptake. The polypeptide is Calpain-10 (Capn10) (Mus musculus (Mouse)).